We begin with the raw amino-acid sequence, 793 residues long: Nuclear cap-binding protein subunit 1 (793 aa).

Residues 28–242 (EKKLQEVIGK…SLSAQIENLR (215 aa)) form the MIF4G domain.

It belongs to the NCBP1 family. As to quaternary structure, component of the nuclear cap-binding complex (CBC), a heterodimer composed of ncbp-1 and ncbp-1 that interacts with m7GpppG-capped RNA.

Its subcellular location is the nucleus. In terms of biological role, component of the cap-binding complex (CBC), which binds cotranscriptionally to the 5'-cap of pre-mRNAs and is involved in various processes such as pre-mRNA splicing and RNA-mediated gene silencing (RNAi). The CBC complex is involved in miRNA-mediated RNA interference and is required for primary microRNAs (miRNAs) processing. In the CBC complex, ncbp-1 does not bind directly capped RNAs (m7GpppG-capped RNA) but is required to stabilize the movement of the N-terminal loop of ncbp-2 and lock the CBC into a high affinity cap-binding state with the cap structure. The protein is Nuclear cap-binding protein subunit 1 (ncbp-1) of Caenorhabditis briggsae.